A 729-amino-acid chain; its full sequence is Sodium-dependent neutral amino acid transporter B(0)AT2 (729 aa).

The Cytoplasmic portion of the chain corresponds to 1–69 (MPKNSKVVKR…ERPAWNSKLQ (69 aa)). Ser-25 and Ser-55 each carry phosphoserine. Residues 42-61 (DVQEEKDTDAEDGSEADDER) are disordered. Over residues 43-59 (VQEEKDTDAEDGSEADD) the composition is skewed to acidic residues. 3 helical membrane passes run 70-90 (YILA…FPYL), 98-117 (AYLL…LFFL), and 142-162 (GIGF…NVII). Topologically, residues 163–225 (GWTLFYFSQS…SSISDSGGLN (63 aa)) are extracellular. N-linked (GlcNAc...) asparagine glycosylation is present at Asn-187. A run of 2 helical transmembrane segments spans residues 226-244 (WKMT…LAMI) and 253-270 (IMYF…CFLI). Residue Asn-276 is glycosylated (N-linked (GlcNAc...) asparagine). The next 2 helical transmembrane spans lie at 306 to 323 (VFFA…FSSY) and 335 to 356 (VLVS…FAVL). Over 357-452 (GFKANIVNEK…FIAFTEAMTH (96 aa)) the chain is Extracellular. N-linked (GlcNAc...) asparagine glycans are attached at residues Asn-383 and Asn-394. 5 consecutive transmembrane segments (helical) span residues 453–472 (FPAS…NLGL), 496–514 (ILTV…IFVQ), 530–550 (TLPL…VYGI), 571–592 (YMWK…IVNM), and 620–642 (VVCF…IRRC). Residues 643-729 (NLIDDSSGNL…DMPDMPESDL (87 aa)) lie on the Cytoplasmic side of the membrane. A phosphoserine mark is found at Ser-687, Ser-699, and Ser-701.

This sequence belongs to the sodium:neurotransmitter symporter (SNF) (TC 2.A.22) family. SLC6A15 subfamily. In terms of tissue distribution, significant expressed in brain, lung and kidney. In brain, mainly expressed int the cortex, the cerebellum and the brain stem.

The protein localises to the membrane. It catalyses the reaction L-pipecolate(in) + Na(+)(in) = L-pipecolate(out) + Na(+)(out). The enzyme catalyses L-leucine(in) + Na(+)(in) = L-leucine(out) + Na(+)(out). It carries out the reaction L-isoleucine(in) + Na(+)(in) = L-isoleucine(out) + Na(+)(out). The catalysed reaction is L-methionine(in) + Na(+)(in) = L-methionine(out) + Na(+)(out). It catalyses the reaction L-proline(in) + Na(+)(in) = L-proline(out) + Na(+)(out). The enzyme catalyses L-alanine(in) + Na(+)(in) = L-alanine(out) + Na(+)(out). It carries out the reaction L-asparagine(in) + Na(+)(in) = L-asparagine(out) + Na(+)(out). The catalysed reaction is L-valine(in) + Na(+)(in) = L-valine(out) + Na(+)(out). It catalyses the reaction L-cysteine(in) + Na(+)(in) = L-cysteine(out) + Na(+)(out). The enzyme catalyses L-glutamine(in) + Na(+)(in) = L-glutamine(out) + Na(+)(out). It carries out the reaction L-serine(in) + Na(+)(in) = L-serine(out) + Na(+)(out). The catalysed reaction is L-threonine(in) + Na(+)(in) = L-threonine(out) + Na(+)(out). It catalyses the reaction L-phenylalanine(in) + Na(+)(in) = L-phenylalanine(out) + Na(+)(out). Its function is as follows. Functions as a sodium-dependent neutral amino acid transporter. Exhibits preference for methionine and for the branched-chain amino acids, particularly leucine, valine and isoleucine. Can also transport low-affinity substrates such as alanine, phenylalanine, glutamine and pipecolic acid. Mediates the saturable, pH-sensitive and electrogenic cotransport of proline and sodium ions with a stoichiometry of 1:1. May have a role as transporter for neurotransmitter precursors into neurons. In contrast to other members of the neurotransmitter transporter family, does not appear to be chloride-dependent. The chain is Sodium-dependent neutral amino acid transporter B(0)AT2 (Slc6a15) from Mus musculus (Mouse).